The following is a 295-amino-acid chain: MSASESQTQARLLAQALPFMQRYENKTIVVKYGGHAMGDAELGRAFAADIALLKQSGVNPIVVHGGGPQIGAMLTKMGIESKFEGGLRVTDQKTVEIVEMVLAGSINKEIVALINQTGEWAIGLCGKDGNMVFAEKAKKTVIDPDSHIERVLDLGFVGEVVEVDRTLLDLLAKSEMIPVIAPVAPGRDGHTYNINADTFAGAIAGALRADRLLFLTDVPGVLDKNGELFKELSVAQARALIKDGTISGGMIPKVETCIDAINAGVHGVVILNGKTAHSVLLEIFTEHGAGTLIVP.

Substrate-binding positions include 66 to 67 (GG), Arg88, and Asn193.

Belongs to the acetylglutamate kinase family. ArgB subfamily.

It localises to the cytoplasm. The catalysed reaction is N-acetyl-L-glutamate + ATP = N-acetyl-L-glutamyl 5-phosphate + ADP. It functions in the pathway amino-acid biosynthesis; L-arginine biosynthesis; N(2)-acetyl-L-ornithine from L-glutamate: step 2/4. Its function is as follows. Catalyzes the ATP-dependent phosphorylation of N-acetyl-L-glutamate. The polypeptide is Acetylglutamate kinase (Allorhizobium ampelinum (strain ATCC BAA-846 / DSM 112012 / S4) (Agrobacterium vitis (strain S4))).